The chain runs to 728 residues: Methionine--tRNA ligase (728 aa).

The 'HIGH' region signature appears at 13–23 (PYANGSIHLGH). The Zn(2+) site is built by C144, C147, C157, and C160. The 'KMSKS' region motif lies at 348-352 (KMSKS). Residue K351 coordinates ATP. Positions 585–620 (LAPAKSQQVAQAVETMEKNSSTTPAPAKEGEAGQAS) are disordered. The 101-residue stretch at 628–728 (DFGKIDLRVA…EGARPGMKVK (101 aa)) folds into the tRNA-binding domain.

Belongs to the class-I aminoacyl-tRNA synthetase family. MetG type 1 subfamily. In terms of assembly, homodimer. The cofactor is Zn(2+).

The protein resides in the cytoplasm. It catalyses the reaction tRNA(Met) + L-methionine + ATP = L-methionyl-tRNA(Met) + AMP + diphosphate. Is required not only for elongation of protein synthesis but also for the initiation of all mRNA translation through initiator tRNA(fMet) aminoacylation. The sequence is that of Methionine--tRNA ligase from Nitrosospira multiformis (strain ATCC 25196 / NCIMB 11849 / C 71).